The sequence spans 123 residues: DNA-directed RNA polymerase I subunit RPA12 (123 aa).

Cys17, Cys20, Cys35, Cys38, Cys84, and Cys87 together coordinate Zn(2+). Residues 17–38 (CPDCGSVLPLPGVQDTVICPRC) form a C4-type zinc finger. Residues 80-120 (VDRRCSRCGHEGMAYYTRQMRSADEGQTVFYTCINCKFQEK) form a TFIIS-type zinc finger. The short motif at 103 to 104 (DE) is the Hairpin element. Cys112 and Cys115 together coordinate Zn(2+).

Belongs to the archaeal RpoM/eukaryotic RPA12/RPB9/RPC11 RNA polymerase family. In terms of assembly, component of the RNA polymerase I (Pol I) complex consisting of 13 subunits: a ten-subunit catalytic core composed of POLR1A/RPA1, POLR1B/RPA2, POLR1C/RPAC1, POLR1D/RPAC2, POLR1H/RPA12, POLR2E/RPABC1, POLR2F/RPABC2, POLR2H/RPABC3, POLR2K/RPABC4 and POLR2L/RPABC5; a mobile stalk subunit POLR1F/RPA43 protruding from the core and additional subunits homologous to general transcription factors POLR1E/RPA49 and POLR1G/RPA34. Part of Pol I pre-initiation complex (PIC), in which Pol I core assembles with RRN3 and promoter-bound UTBF and SL1/TIF-IB complex.

It is found in the nucleus. Its subcellular location is the nucleolus. Its function is as follows. Core component of RNA polymerase I (Pol I), a DNA-dependent RNA polymerase which synthesizes ribosomal RNA precursors using the four ribonucleoside triphosphates as substrates. Can mediate Pol I proofreading of the nascent RNA transcript. Anchors into the Pol I active site to monitor transcription fidelity and cleave mis-incorporated 5'-ribonucleotides. This Rattus norvegicus (Rat) protein is DNA-directed RNA polymerase I subunit RPA12.